Here is a 247-residue protein sequence, read N- to C-terminus: 3-deoxy-manno-octulosonate cytidylyltransferase (247 aa).

Belongs to the KdsB family.

The protein localises to the cytoplasm. The enzyme catalyses 3-deoxy-alpha-D-manno-oct-2-ulosonate + CTP = CMP-3-deoxy-beta-D-manno-octulosonate + diphosphate. Its pathway is nucleotide-sugar biosynthesis; CMP-3-deoxy-D-manno-octulosonate biosynthesis; CMP-3-deoxy-D-manno-octulosonate from 3-deoxy-D-manno-octulosonate and CTP: step 1/1. It participates in bacterial outer membrane biogenesis; lipopolysaccharide biosynthesis. Functionally, activates KDO (a required 8-carbon sugar) for incorporation into bacterial lipopolysaccharide in Gram-negative bacteria. The sequence is that of 3-deoxy-manno-octulosonate cytidylyltransferase from Rhodopseudomonas palustris (strain BisA53).